Consider the following 49-residue polypeptide: SPbeta prophage-derived uncharacterized protein YoqT (49 aa).

The chain crosses the membrane as a helical span at residues 7 to 29 (CFVNWSFDKIMDYILIAGLYFVF).

Its subcellular location is the cell membrane. This is SPbeta prophage-derived uncharacterized protein YoqT (yoqT) from Bacillus subtilis (strain 168).